The sequence spans 108 residues: Large ribosomal subunit protein eL33A (108 aa).

Belongs to the eukaryotic ribosomal protein eL33 family. In terms of assembly, component of the large ribosomal subunit (LSU). Mature yeast ribosomes consist of a small (40S) and a large (60S) subunit. The 40S small subunit contains 1 molecule of ribosomal RNA (18S rRNA) and at least 33 different proteins. The large 60S subunit contains 3 rRNA molecules (25S, 5.8S and 5S rRNA) and at least 46 different proteins.

The protein localises to the cytoplasm. It localises to the nucleus. Its subcellular location is the nucleolus. Component of the ribosome, a large ribonucleoprotein complex responsible for the synthesis of proteins in the cell. The small ribosomal subunit (SSU) binds messenger RNAs (mRNAs) and translates the encoded message by selecting cognate aminoacyl-transfer RNA (tRNA) molecules. The large subunit (LSU) contains the ribosomal catalytic site termed the peptidyl transferase center (PTC), which catalyzes the formation of peptide bonds, thereby polymerizing the amino acids delivered by tRNAs into a polypeptide chain. The nascent polypeptides leave the ribosome through a tunnel in the LSU and interact with protein factors that function in enzymatic processing, targeting, and the membrane insertion of nascent chains at the exit of the ribosomal tunnel. This chain is Large ribosomal subunit protein eL33A (rpl35b), found in Schizosaccharomyces pombe (strain 972 / ATCC 24843) (Fission yeast).